We begin with the raw amino-acid sequence, 588 residues long: MKFMELGFRPDTFYTVESVRSVSSDLLNDLVIQVKSTKYLLHKFPMLSKCLRLKNLVSSQETETSQEQQVIQLVDFPGETEAFELCAKFCYGITITLCAHNVVAVRCAAEYLGMTEEVELGETENLVQRLELFLTTCVFKSWRDSYVTLQTTKVLPLWSEDLGITNRCIEAIANGVTVSPGEDFSTQLETGLLRNRSRIRRDEILCNGGGGSKAESLRWWGEDLAELGLDLYRRTMVAIKSSHRKISPRLIGNALRIYASKWLPSIQESSADSNLVLESVISLLPEEKSSVPCSFLLQLLKMANVMNVSHSSKMELAIKAGNQLDKATVSELLIPLSDKSGMLYDVDVVKMMVKQFLSHISPEIRPTRTRTEHRRSRSEENINLEEIQEVRGSLSTSSSPPPLLSKVAKLVDSYLQEIARDVNLTVSKFVELAETIPDTSRICHDDLYNAIDVYLQVHKKIEKCERKRLCRILDCKKLSVEASKKAAQNELLPLRVIVQILFVEQARATLATTRNNITTNETAVLKRSFTTRREEGGQEEEERDETKPSGGFLQSTPSRFMALCAIPRQPKKLLCKLLSISRSLSQRI.

Residues 28 to 99 form the BTB domain; the sequence is NDLVIQVKST…CYGITITLCA (72 aa). The region spanning 218-507 is the NPH3 domain; that stretch reads RWWGEDLAEL…VQILFVEQAR (290 aa). 2 positions are modified to phosphoserine: serine 376 and serine 378. Tyrosine 448 carries the post-translational modification Phosphotyrosine. Residues 529-554 form a disordered region; sequence FTTRREEGGQEEEERDETKPSGGFLQ.

The protein belongs to the NPH3 family.

It participates in protein modification; protein ubiquitination. Functionally, may act as a substrate-specific adapter of an E3 ubiquitin-protein ligase complex (CUL3-RBX1-BTB) which mediates the ubiquitination and subsequent proteasomal degradation of target proteins. The polypeptide is BTB/POZ domain-containing protein At3g26490 (Arabidopsis thaliana (Mouse-ear cress)).